The sequence spans 417 residues: Serine hydroxymethyltransferase (417 aa).

(6S)-5,6,7,8-tetrahydrofolate-binding positions include leucine 121 and 125–127 (GHL). At lysine 229 the chain carries N6-(pyridoxal phosphate)lysine. 355 to 357 (SPF) provides a ligand contact to (6S)-5,6,7,8-tetrahydrofolate.

Belongs to the SHMT family. In terms of assembly, homodimer. Pyridoxal 5'-phosphate serves as cofactor.

The protein localises to the cytoplasm. The catalysed reaction is (6R)-5,10-methylene-5,6,7,8-tetrahydrofolate + glycine + H2O = (6S)-5,6,7,8-tetrahydrofolate + L-serine. The protein operates within one-carbon metabolism; tetrahydrofolate interconversion. Its pathway is amino-acid biosynthesis; glycine biosynthesis; glycine from L-serine: step 1/1. Its function is as follows. Catalyzes the reversible interconversion of serine and glycine with tetrahydrofolate (THF) serving as the one-carbon carrier. This reaction serves as the major source of one-carbon groups required for the biosynthesis of purines, thymidylate, methionine, and other important biomolecules. Also exhibits THF-independent aldolase activity toward beta-hydroxyamino acids, producing glycine and aldehydes, via a retro-aldol mechanism. The sequence is that of Serine hydroxymethyltransferase from Shewanella frigidimarina (strain NCIMB 400).